Consider the following 526-residue polypeptide: Phenylacetaldehyde oxime monooxygenase CYP71AN24 (526 aa).

The chain crosses the membrane as a helical span at residues 22–42 (SFNIFLVPILCLSIFILFSLT). C465 is a binding site for heme.

This sequence belongs to the cytochrome P450 family. Heme serves as cofactor. Expressed in seedlings and leaves.

The protein resides in the membrane. The catalysed reaction is (E)-phenylacetaldehyde oxime + reduced [NADPH--hemoprotein reductase] + O2 = (R)-mandelonitrile + oxidized [NADPH--hemoprotein reductase] + 2 H2O + H(+). The enzyme catalyses phenylacetonitrile + reduced [NADPH--hemoprotein reductase] + O2 = (R)-mandelonitrile + oxidized [NADPH--hemoprotein reductase] + H2O + H(+). Involved in L-phenylalanine-derived cyanogenic glycoside biosynthesis, including prunasin and amygdalin defensive agents. Catalyzes the conversion of phenylacetaldoxime (PAOx) and phenylacetonitrile (PAN) into mandelonitrile (MAN). To a lower extent, can convert various aromatic aldoximes and nitriles; mediates the transformation of 4-hydroxyphenylacetaldoxime, 4-hydroxyphenylacetonitrile, indole-3-acetal-doxime and indole-3-acetonitrile into the corresponding hydroxynitriles, but cannot use the aliphatic compounds 2-methylpropanaloxime and 2-methylpropanenitrile as substrates. This is Phenylacetaldehyde oxime monooxygenase CYP71AN24 from Prunus mume (Japanese apricot).